The sequence spans 233 residues: 7-cyano-7-deazaguanine synthase (233 aa).

Position 18-28 (18-28) interacts with ATP; the sequence is FSGGQDSTTCL. Residues Cys198, Cys213, Cys216, and Cys219 each coordinate Zn(2+).

The protein belongs to the QueC family. It depends on Zn(2+) as a cofactor.

The catalysed reaction is 7-carboxy-7-deazaguanine + NH4(+) + ATP = 7-cyano-7-deazaguanine + ADP + phosphate + H2O + H(+). Its pathway is purine metabolism; 7-cyano-7-deazaguanine biosynthesis. In terms of biological role, catalyzes the ATP-dependent conversion of 7-carboxy-7-deazaguanine (CDG) to 7-cyano-7-deazaguanine (preQ(0)). The sequence is that of 7-cyano-7-deazaguanine synthase from Wolinella succinogenes (strain ATCC 29543 / DSM 1740 / CCUG 13145 / JCM 31913 / LMG 7466 / NCTC 11488 / FDC 602W) (Vibrio succinogenes).